Here is a 230-residue protein sequence, read N- to C-terminus: Urease accessory protein UreF (230 aa).

The protein belongs to the UreF family. UreD, UreF and UreG form a complex that acts as a GTP-hydrolysis-dependent molecular chaperone, activating the urease apoprotein by helping to assemble the nickel containing metallocenter of UreC. The UreE protein probably delivers the nickel.

The protein resides in the cytoplasm. Required for maturation of urease via the functional incorporation of the urease nickel metallocenter. This Allorhizobium ampelinum (strain ATCC BAA-846 / DSM 112012 / S4) (Agrobacterium vitis (strain S4)) protein is Urease accessory protein UreF.